The chain runs to 29 residues: Phospholemman-like protein (29 aa).

Belongs to the FXYD family. Post-translationally, phosphorylated by protein kinase C.

The protein resides in the membrane. Its function is as follows. Induces a hyperpolarization-activated chloride current when expressed in Xenopus oocytes. The sequence is that of Phospholemman-like protein from Scyliorhinus canicula (Small-spotted catshark).